The chain runs to 107 residues: Phosphoribosyl-ATP pyrophosphatase (107 aa).

The protein belongs to the PRA-PH family.

It localises to the cytoplasm. The catalysed reaction is 1-(5-phospho-beta-D-ribosyl)-ATP + H2O = 1-(5-phospho-beta-D-ribosyl)-5'-AMP + diphosphate + H(+). It participates in amino-acid biosynthesis; L-histidine biosynthesis; L-histidine from 5-phospho-alpha-D-ribose 1-diphosphate: step 2/9. This is Phosphoribosyl-ATP pyrophosphatase from Bacillus cereus (strain AH187).